The chain runs to 178 residues: ATP synthase subunit delta (178 aa).

It belongs to the ATPase delta chain family. As to quaternary structure, F-type ATPases have 2 components, F(1) - the catalytic core - and F(0) - the membrane proton channel. F(1) has five subunits: alpha(3), beta(3), gamma(1), delta(1), epsilon(1). F(0) has three main subunits: a(1), b(2) and c(10-14). The alpha and beta chains form an alternating ring which encloses part of the gamma chain. F(1) is attached to F(0) by a central stalk formed by the gamma and epsilon chains, while a peripheral stalk is formed by the delta and b chains.

It is found in the cell membrane. Its function is as follows. F(1)F(0) ATP synthase produces ATP from ADP in the presence of a proton or sodium gradient. F-type ATPases consist of two structural domains, F(1) containing the extramembraneous catalytic core and F(0) containing the membrane proton channel, linked together by a central stalk and a peripheral stalk. During catalysis, ATP synthesis in the catalytic domain of F(1) is coupled via a rotary mechanism of the central stalk subunits to proton translocation. This protein is part of the stalk that links CF(0) to CF(1). It either transmits conformational changes from CF(0) to CF(1) or is implicated in proton conduction. The chain is ATP synthase subunit delta from Streptococcus pyogenes serotype M3 (strain SSI-1).